A 66-amino-acid polypeptide reads, in one-letter code: Early E3 7.7 kDa protein (66 aa).

N-linked (GlcNAc...) asparagine; by host glycosylation is found at asparagine 7 and asparagine 24. A helical membrane pass occupies residues 44–64 (ITILIVIGILILSVILYFLFS).

The protein resides in the host nucleus membrane. The chain is Early E3 7.7 kDa protein from Human adenovirus B serotype 7 (HAdV-7).